The following is a 216-amino-acid chain: NKG2-D type II integral membrane protein (216 aa).

Over 1-51 (MGWIRGRRSRHSWEMSEFHNYNLDLKKSDFSTRWQKQRCPVVKSKCRENAS) the chain is Cytoplasmic. Residues 52–72 (PFFFCCFIAVAMGIRFIIMVT) form a helical; Signal-anchor for type II membrane protein membrane-spanning segment. Residues 73–216 (IWSAVFLNSL…NTYICMQRTV (144 aa)) are Extracellular-facing. Cystine bridges form between Cys96/Cys105 and Cys99/Cys110. Positions 98–213 (PCPKNWICYK…STPNTYICMQ (116 aa)) constitute a C-type lectin domain. 4 N-linked (GlcNAc...) asparagine glycosylation sites follow: Asn115, Asn131, Asn163, and Asn202. Disulfide bonds link Cys127–Cys211 and Cys189–Cys203.

As to quaternary structure, homodimer; disulfide-linked. Heterohexamer composed of two subunits of KLRK1 and four subunits of HCST/DAP10. Interacts (via transmembrane domain) with HCST/DAP10 (via transmembrane domain); the interaction is required for KLRK1 NK cell surface and induces NK cell-mediated cytotoxicity. Can form disulfide-bonded heterodimer with CD94. Interacts with CEACAM1; recruits PTPN6 that dephosphorylates VAV1. Natural killer cells.

It is found in the cell membrane. Functionally, functions as an activating and costimulatory receptor involved in immunosurveillance upon binding to various cellular stress-inducible ligands displayed at the surface of autologous tumor cells and virus-infected cells. Provides both stimulatory and costimulatory innate immune responses on activated killer (NK) cells, leading to cytotoxic activity. Acts as a costimulatory receptor for T-cell receptor (TCR) in CD8(+) T-cell-mediated adaptive immune responses by amplifying T-cell activation. Stimulates perforin-mediated elimination of ligand-expressing tumor cells. Signaling involves calcium influx, culminating in the expression of TNF-alpha. Participates in NK cell-mediated bone marrow graft rejection. May play a regulatory role in differentiation and survival of NK cells. Binds to ligands belonging to various subfamilies of MHC class I-related glycoproteins. This chain is NKG2-D type II integral membrane protein (KLRK1), found in Pan troglodytes (Chimpanzee).